The primary structure comprises 881 residues: DNA mismatch repair protein MutS (881 aa).

632-639 (GPNMGGKS) provides a ligand contact to ATP.

This sequence belongs to the DNA mismatch repair MutS family.

This protein is involved in the repair of mismatches in DNA. It is possible that it carries out the mismatch recognition step. This protein has a weak ATPase activity. The sequence is that of DNA mismatch repair protein MutS from Acinetobacter baylyi (strain ATCC 33305 / BD413 / ADP1).